Consider the following 382-residue polypeptide: ATP phosphoribosyltransferase regulatory subunit (382 aa).

It belongs to the class-II aminoacyl-tRNA synthetase family. HisZ subfamily. In terms of assembly, heteromultimer composed of HisG and HisZ subunits.

The protein localises to the cytoplasm. It functions in the pathway amino-acid biosynthesis; L-histidine biosynthesis; L-histidine from 5-phospho-alpha-D-ribose 1-diphosphate: step 1/9. Its function is as follows. Required for the first step of histidine biosynthesis. May allow the feedback regulation of ATP phosphoribosyltransferase activity by histidine. The protein is ATP phosphoribosyltransferase regulatory subunit of Acidovorax ebreus (strain TPSY) (Diaphorobacter sp. (strain TPSY)).